Reading from the N-terminus, the 457-residue chain is DNA repair protein RadA (457 aa).

The C4-type zinc-finger motif lies at 10 to 27 (CQECGYESAKWMGKCPGC). 97-104 (GDPGIGKS) lines the ATP pocket. The RadA KNRFG motif signature appears at 254 to 258 (KNRFG). A lon-protease-like region spans residues 353–457 (DAYVNVAGGV…QDALEVTLGR (105 aa)).

The protein belongs to the RecA family. RadA subfamily.

Its function is as follows. DNA-dependent ATPase involved in processing of recombination intermediates, plays a role in repairing DNA breaks. Stimulates the branch migration of RecA-mediated strand transfer reactions, allowing the 3' invading strand to extend heteroduplex DNA faster. Binds ssDNA in the presence of ADP but not other nucleotides, has ATPase activity that is stimulated by ssDNA and various branched DNA structures, but inhibited by SSB. Does not have RecA's homology-searching function. In Halalkalibacterium halodurans (strain ATCC BAA-125 / DSM 18197 / FERM 7344 / JCM 9153 / C-125) (Bacillus halodurans), this protein is DNA repair protein RadA.